Reading from the N-terminus, the 68-residue chain is Translational regulator CsrA 1 (68 aa).

Belongs to the CsrA/RsmA family. In terms of assembly, homodimer; the beta-strands of each monomer intercalate to form a hydrophobic core, while the alpha-helices form wings that extend away from the core.

It localises to the cytoplasm. In terms of biological role, a key translational regulator that binds mRNA to regulate translation initiation and/or mRNA stability. Mediates global changes in gene expression, shifting from rapid growth to stress survival by linking envelope stress, the stringent response and the catabolite repression systems. Usually binds in the 5'-UTR; binding at or near the Shine-Dalgarno sequence prevents ribosome-binding, repressing translation, binding elsewhere in the 5'-UTR can activate translation and/or stabilize the mRNA. Its function is antagonized by small RNA(s). In Coxiella burnetii (strain RSA 493 / Nine Mile phase I), this protein is Translational regulator CsrA 1.